A 310-amino-acid chain; its full sequence is Olfactory receptor 5T7 (310 aa).

Residues methionine 1–isoleucine 23 are Extracellular-facing. An N-linked (GlcNAc...) asparagine glycan is attached at asparagine 3. Residues leucine 24–isoleucine 44 traverse the membrane as a helical segment. Residues threonine 45–arginine 52 are Cytoplasmic-facing. A helical transmembrane segment spans residues leucine 53–threonine 73. The Extracellular segment spans residues valine 74–threonine 97. Residues cysteine 95 and cysteine 187 are joined by a disulfide bond. A helical transmembrane segment spans residues glutamine 98 to tyrosine 118. Residues aspartate 119 to valine 131 are Cytoplasmic-facing. A helical membrane pass occupies residues valine 132–leucine 152. Topologically, residues histidine 153–glutamine 194 are extracellular. A helical membrane pass occupies residues leucine 195–serine 215. Residues tyrosine 216–valine 235 lie on the Cytoplasmic side of the membrane. A helical membrane pass occupies residues phenylalanine 236–methionine 256. Over tyrosine 257–aspartate 269 the chain is Extracellular. The helical transmembrane segment at methionine 270–leucine 290 threads the bilayer. At arginine 291–glycine 310 the chain is on the cytoplasmic side.

This sequence belongs to the G-protein coupled receptor 1 family.

It is found in the cell membrane. Its function is as follows. Potential odorant receptor. This is Olfactory receptor 5T7 from Mus musculus (Mouse).